Reading from the N-terminus, the 281-residue chain is Phosphatidylglycerol--prolipoprotein diacylglyceryl transferase (281 aa).

4 helical membrane passes run 29-49 (FYSL…GKMI), 64-84 (LFFY…VLFY), 100-120 (GGMS…FVSW), and 124-144 (LNWL…MFLG). Arg145 is an a 1,2-diacyl-sn-glycero-3-phospho-(1'-sn-glycerol) binding site. The next 3 membrane-spanning stretches (helical) occupy residues 180–200 (QLYQ…LLFW), 209–229 (GVLV…NEFF), and 248–268 (GQWL…YALT).

It belongs to the Lgt family.

Its subcellular location is the cell inner membrane. The catalysed reaction is L-cysteinyl-[prolipoprotein] + a 1,2-diacyl-sn-glycero-3-phospho-(1'-sn-glycerol) = an S-1,2-diacyl-sn-glyceryl-L-cysteinyl-[prolipoprotein] + sn-glycerol 1-phosphate + H(+). It participates in protein modification; lipoprotein biosynthesis (diacylglyceryl transfer). Catalyzes the transfer of the diacylglyceryl group from phosphatidylglycerol to the sulfhydryl group of the N-terminal cysteine of a prolipoprotein, the first step in the formation of mature lipoproteins. This chain is Phosphatidylglycerol--prolipoprotein diacylglyceryl transferase, found in Erythrobacter litoralis (strain HTCC2594).